An 828-amino-acid chain; its full sequence is Periplasmic nitrate reductase (828 aa).

Positions 1-32 (MNLSRRDFMKANAAMAAATAAGLSIPVKNVEA) form a signal peptide, tat-type signal. The 4Fe-4S Mo/W bis-MGD-type domain maps to 37–93 (IKWDKAVCRFCGTGCAVLVGTKDGRVVASQGDPDAEVNRGLNCIKGYFLPKIMYGKD). [4Fe-4S] cluster-binding residues include Cys-44, Cys-47, Cys-51, and Cys-79. Residues Lys-81, Gln-148, Asn-173, Cys-177, 210–217 (WGSNMAEM), 241–245 (STFEH), Met-371, Gln-375, Asn-481, 507–508 (SD), Lys-530, Asp-557, and 717–726 (TGRVLEHWHT) each bind Mo-bis(molybdopterin guanine dinucleotide). Phe-793 is a substrate binding site. 2 residues coordinate Mo-bis(molybdopterin guanine dinucleotide): Asn-801 and Lys-818.

This sequence belongs to the prokaryotic molybdopterin-containing oxidoreductase family. NasA/NapA/NarB subfamily. Component of the periplasmic nitrate reductase NapAB complex composed of NapA and NapB. The cofactor is [4Fe-4S] cluster. Mo-bis(molybdopterin guanine dinucleotide) is required as a cofactor. In terms of processing, predicted to be exported by the Tat system. The position of the signal peptide cleavage has not been experimentally proven.

The protein localises to the periplasm. It catalyses the reaction 2 Fe(II)-[cytochrome] + nitrate + 2 H(+) = 2 Fe(III)-[cytochrome] + nitrite + H2O. Functionally, catalytic subunit of the periplasmic nitrate reductase complex NapAB. Receives electrons from NapB and catalyzes the reduction of nitrate to nitrite. The protein is Periplasmic nitrate reductase of Aggregatibacter actinomycetemcomitans (Actinobacillus actinomycetemcomitans).